The sequence spans 448 residues: RING finger protein 44 (448 aa).

The RING-type; atypical zinc finger occupies 396–437 (CVVCFSDFESRQLLRVLPCNHEFHAKCVDKWLKTNRTCPICR).

The polypeptide is RING finger protein 44 (rnf44) (Danio rerio (Zebrafish)).